The following is a 321-amino-acid chain: Biotin synthase (321 aa).

The 230-residue stretch at 44–273 folds into the Radical SAM core domain; the sequence is FCGNVFDLCT…DGFVRIAAGR (230 aa). [4Fe-4S] cluster-binding residues include cysteine 62, cysteine 66, and cysteine 69. Residues serine 106, cysteine 138, cysteine 198, and arginine 268 each contribute to the [2Fe-2S] cluster site.

It belongs to the radical SAM superfamily. Biotin synthase family. In terms of assembly, homodimer. [4Fe-4S] cluster serves as cofactor. Requires [2Fe-2S] cluster as cofactor.

It catalyses the reaction (4R,5S)-dethiobiotin + (sulfur carrier)-SH + 2 reduced [2Fe-2S]-[ferredoxin] + 2 S-adenosyl-L-methionine = (sulfur carrier)-H + biotin + 2 5'-deoxyadenosine + 2 L-methionine + 2 oxidized [2Fe-2S]-[ferredoxin]. It functions in the pathway cofactor biosynthesis; biotin biosynthesis; biotin from 7,8-diaminononanoate: step 2/2. Its function is as follows. Catalyzes the conversion of dethiobiotin (DTB) to biotin by the insertion of a sulfur atom into dethiobiotin via a radical-based mechanism. This is Biotin synthase from Akkermansia muciniphila (strain ATCC BAA-835 / DSM 22959 / JCM 33894 / BCRC 81048 / CCUG 64013 / CIP 107961 / Muc).